A 1023-amino-acid polypeptide reads, in one-letter code: Sodium/potassium-transporting ATPase subunit alpha-1 (1023 aa).

A propeptide spanning residues 1-5 (MGKGV) is cleaved from the precursor. Basic and acidic residues predominate over residues 1–11 (MGKGVGRDKYE). Residues 1-39 (MGKGVGRDKYEPAAVSEHGDKKGKKAKKERDMDELKKEV) are disordered. Residues 6–96 (GRDKYEPAAV…PEWVKFCRQL (91 aa)) are Cytoplasmic-facing. Residue K9 is modified to N6-acetyllysine. At Y10 the chain carries Phosphotyrosine. S16 carries the phosphoserine modification. Position 21 is an N6-acetyllysine (K21). Residues 28 to 39 (KERDMDELKKEV) show a composition bias toward basic and acidic residues. S40 and S47 each carry phosphoserine. The phosphoinositide-3 kinase binding stretch occupies residues 82–84 (PPP). A helical membrane pass occupies residues 97–117 (FGGFSMLLWIGAILCFLAYGI). At 118–129 (RSATEEEPPNDD) the chain is on the extracellular side. A helical transmembrane segment spans residues 130–150 (LYLGVVLSAVVIITGCFSYYQ). The Cytoplasmic portion of the chain corresponds to 151–291 (EAKSSKIMES…TPIAEEIEHF (141 aa)). Residues 216 to 235 (SSLTGESEPQTRSPDFTNEN) are disordered. A Phosphoserine modification is found at S228. At Y260 the chain carries Phosphotyrosine. The chain crosses the membrane as a helical span at residues 292 to 312 (IHLITGVAVFLGVSFFILSLI). The Extracellular segment spans residues 313–319 (LEYTWLE). The helical transmembrane segment at 320–340 (AVIFLIGIIVANVPEGLLATV) threads the bilayer. At 341–775 (TVCLTLTAKR…RLIFDNLKKS (435 aa)) the chain is on the cytoplasmic side. The active-site 4-aspartylphosphate intermediate is the D376. A phosphoserine mark is found at S452 and S484. K487 contributes to the ATP binding site. Y542 carries the phosphotyrosine modification. The tract at residues 596–717 (RAAVPDAVGK…QGAIVAVTGD (122 aa)) is mediates interaction with SCN7A. The residue at position 661 (K661) is an N6-succinyllysine. Residues S668 and S675 each carry the phosphoserine modification. Mg(2+) is bound by residues D717 and D721. Residues 776–798 (IAYTLTSNIPEITPFLIFIIANI) form a helical membrane-spanning segment. Topologically, residues 799–801 (PLP) are extracellular. Residues 802-824 (LGTVTILCIDLGTDMVPAISLAY) form a helical membrane-spanning segment. At 825-849 (EQAESDIMKRQPRNPKTDKLVNERL) the chain is on the cytoplasmic side. A helical membrane pass occupies residues 850-872 (ISMAYGQIGMIQALGGFFTYFVI). At 873–915 (LAENGFLPFHLLGIRETWDDRWVNDVEDSYGQQWTYEQRKIVE) the chain is on the extracellular side. A helical transmembrane segment spans residues 916–936 (FTCHTAFFVSIVVVQWADLVI). The Cytoplasmic portion of the chain corresponds to 937 to 952 (CKTRRNSVFQQGMKNK). S943 bears the Phosphoserine; by PKA mark. A helical transmembrane segment spans residues 953–973 (ILIFGLFEETALAAFLSYCPG). Over 974-979 (MGAALR) the chain is Extracellular. A helical transmembrane segment spans residues 980-1000 (MYPLKPTWWFCAFPYSLLIFV). Residues 1001–1023 (YDEVRKLIIRRRPGGWVEKETYY) lie on the Cytoplasmic side of the membrane.

This sequence belongs to the cation transport ATPase (P-type) (TC 3.A.3) family. Type IIC subfamily. The sodium/potassium-transporting ATPase is composed of a catalytic alpha subunit, an auxiliary non-catalytic beta subunit and an additional regulatory subunit. Interacts with regulatory subunit FXYD1. Interacts with regulatory subunit FXYD3. Interacts with SIK1. Interacts with SLC35G1 and STIM1. Interacts with CLN3; this interaction regulates the sodium/potassium-transporting ATPase complex localization at the plasma membrane. Interacts with SCN7A; activates ATP1A1 P-type sodium:potassium-exchanging transporter activity which indirectly signals to nearby neurons to regulate sodium homeostasis. Phosphorylation on Tyr-10 modulates pumping activity. Phosphorylation of Ser-943 by PKA modulates the response of ATP1A1 to PKC. Dephosphorylation by protein phosphatase 2A (PP2A) following increases in intracellular sodium, leading to increase catalytic activity.

The protein localises to the cell membrane. It is found in the basolateral cell membrane. It localises to the sarcolemma. Its subcellular location is the cell projection. The protein resides in the axon. The protein localises to the melanosome. It catalyses the reaction K(+)(out) + Na(+)(in) + ATP + H2O = K(+)(in) + Na(+)(out) + ADP + phosphate + H(+). Functionally, this is the catalytic component of the active enzyme, which catalyzes the hydrolysis of ATP coupled with the exchange of sodium and potassium ions across the plasma membrane. This action creates the electrochemical gradient of sodium and potassium ions, providing the energy for active transport of various nutrients. Could also be part of an osmosensory signaling pathway that senses body-fluid sodium levels and controls salt intake behavior as well as voluntary water intake to regulate sodium homeostasis. In Mus musculus (Mouse), this protein is Sodium/potassium-transporting ATPase subunit alpha-1 (Atp1a1).